Consider the following 119-residue polypeptide: Large ribosomal subunit protein uL18 (119 aa).

It belongs to the universal ribosomal protein uL18 family. Part of the 50S ribosomal subunit; part of the 5S rRNA/L5/L18/L25 subcomplex. Contacts the 5S and 23S rRNAs.

Its function is as follows. This is one of the proteins that bind and probably mediate the attachment of the 5S RNA into the large ribosomal subunit, where it forms part of the central protuberance. This is Large ribosomal subunit protein uL18 from Clostridium kluyveri (strain ATCC 8527 / DSM 555 / NBRC 12016 / NCIMB 10680 / K1).